A 98-amino-acid polypeptide reads, in one-letter code: DNA-binding protein Fis (98 aa).

Positions 74–93 (QTRAALMMGINRGTLRKKLK) form a DNA-binding region, H-T-H motif.

This sequence belongs to the transcriptional regulatory Fis family. In terms of assembly, homodimer.

In terms of biological role, activates ribosomal RNA transcription. Plays a direct role in upstream activation of rRNA promoters. This Yersinia enterocolitica serotype O:8 / biotype 1B (strain NCTC 13174 / 8081) protein is DNA-binding protein Fis.